The sequence spans 110 residues: Thiosulfate sulfurtransferase GlpE (110 aa).

The Rhodanese domain maps to 17–105; the sequence is KQEGAVVVDI…WRATYPAETA (89 aa). Catalysis depends on Cys-65, which acts as the Cysteine persulfide intermediate.

Belongs to the GlpE family.

The protein localises to the cytoplasm. The catalysed reaction is thiosulfate + hydrogen cyanide = thiocyanate + sulfite + 2 H(+). It catalyses the reaction thiosulfate + [thioredoxin]-dithiol = [thioredoxin]-disulfide + hydrogen sulfide + sulfite + 2 H(+). Functionally, transferase that catalyzes the transfer of sulfur from thiosulfate to thiophilic acceptors such as cyanide or dithiols. May function in a CysM-independent thiosulfate assimilation pathway by catalyzing the conversion of thiosulfate to sulfite, which can then be used for L-cysteine biosynthesis. This Pseudomonas putida (strain GB-1) protein is Thiosulfate sulfurtransferase GlpE.